The sequence spans 51 residues: Ribosome biogenesis protein Nop10 (51 aa).

The protein belongs to the NOP10 family.

In terms of biological role, involved in ribosome biogenesis; more specifically in 18S rRNA pseudouridylation and in cleavage of pre-rRNA. This Nitrosopumilus maritimus (strain SCM1) protein is Ribosome biogenesis protein Nop10.